The sequence spans 510 residues: Glutamate--tRNA ligase (510 aa).

Positions 15-25 (PSPTGDPHVGT) match the 'HIGH' region motif. Residues 256–260 (KISKR) carry the 'KMSKS' region motif. Residue K259 participates in ATP binding.

The protein belongs to the class-I aminoacyl-tRNA synthetase family. Glutamate--tRNA ligase type 1 subfamily. As to quaternary structure, monomer.

It localises to the cytoplasm. It carries out the reaction tRNA(Glu) + L-glutamate + ATP = L-glutamyl-tRNA(Glu) + AMP + diphosphate. Functionally, catalyzes the attachment of glutamate to tRNA(Glu) in a two-step reaction: glutamate is first activated by ATP to form Glu-AMP and then transferred to the acceptor end of tRNA(Glu). The polypeptide is Glutamate--tRNA ligase (Fusobacterium nucleatum subsp. nucleatum (strain ATCC 25586 / DSM 15643 / BCRC 10681 / CIP 101130 / JCM 8532 / KCTC 2640 / LMG 13131 / VPI 4355)).